Consider the following 198-residue polypeptide: Translation machinery-associated protein 22 (198 aa).

The region spanning 100–171 (IIIKRSERTK…EIVEMIRQQV (72 aa)) is the SUI1 domain.

This sequence belongs to the DENR family. In terms of assembly, interacts with the 40S ribosomal subunit.

The protein localises to the cytoplasm. The protein is Translation machinery-associated protein 22 (TMA22) of Cryptococcus neoformans var. neoformans serotype D (strain B-3501A) (Filobasidiella neoformans).